The chain runs to 81 residues: Large ribosomal subunit protein bL31 (81 aa).

4 residues coordinate Zn(2+): cysteine 16, cysteine 18, cysteine 36, and cysteine 39.

This sequence belongs to the bacterial ribosomal protein bL31 family. Type A subfamily. Part of the 50S ribosomal subunit. Requires Zn(2+) as cofactor.

Binds the 23S rRNA. The chain is Large ribosomal subunit protein bL31 from Rhodopirellula baltica (strain DSM 10527 / NCIMB 13988 / SH1).